The primary structure comprises 317 residues: Protease HtpX homolog (317 aa).

2 helical membrane-spanning segments follow: residues 14 to 34 (LMGI…LYYI) and 41 to 61 (IALL…QWLF). Zn(2+) is bound at residue H146. The active site involves E147. H150 serves as a coordination point for Zn(2+). Helical transmembrane passes span 158–178 (MLLA…TLLF) and 189–209 (IVLL…LILA). E215 is a Zn(2+) binding site.

This sequence belongs to the peptidase M48B family. Zn(2+) serves as cofactor.

The protein resides in the cell membrane. The sequence is that of Protease HtpX homolog from Thermoplasma acidophilum (strain ATCC 25905 / DSM 1728 / JCM 9062 / NBRC 15155 / AMRC-C165).